A 370-amino-acid polypeptide reads, in one-letter code: Pantothenate kinase 3 (370 aa).

Glu-138 serves as the catalytic Proton acceptor. Residues Ser-192, Ser-195, and Arg-207 each coordinate acetyl-CoA.

Belongs to the type II pantothenate kinase family. In terms of assembly, homodimer. As to expression, highly expressed in the liver.

It localises to the cytoplasm. It catalyses the reaction (R)-pantothenate + ATP = (R)-4'-phosphopantothenate + ADP + H(+). Its pathway is cofactor biosynthesis; coenzyme A biosynthesis; CoA from (R)-pantothenate: step 1/5. Its activity is regulated as follows. Subject to allosteric regulation, exists in two distinct conformational states, a catalytically incompetent (or open) conformation stabilized by the binding of acetyl(acyl)-CoA, and a catalytically competent (or closed) conformation stabilized by ATP-binding. Inhibited by acetyl-CoA and its thioesters which act as allosteric inhibitors and compete with the ATP-binding site. Inhibited by sulfonylureas and thiazolidinediones. Activated by oleoylethanolamide, palmitoyl-carnitine and oleoyl-carnitine. In terms of biological role, catalyzes the phosphorylation of pantothenate to generate 4'-phosphopantothenate in the first and rate-determining step of coenzyme A (CoA) synthesis. This chain is Pantothenate kinase 3 (PANK3), found in Homo sapiens (Human).